The primary structure comprises 46 residues: KSCCPTTAARNQYNICRLPGTPRPVCAALSGCKIISGTGCPPGYRH.

Cystine bridges form between Cys3–Cys40, Cys4–Cys32, and Cys16–Cys26.

It belongs to the plant thionin (TC 1.C.44) family.

The protein localises to the secreted. Its function is as follows. Thionins are small plant proteins which are toxic to animal cells. They seem to exert their toxic effect at the level of the cell membrane. Their precise function is not known. This Dendrophthora clavata (Columbian mistletoe) protein is Denclatoxin-B.